Reading from the N-terminus, the 61-residue chain is Furostanol glycoside 26-O-beta-glucosidase (61 aa).

The active-site Proton donor/acceptor is Asp33. Asp33 is a binding site for D-glucose.

Belongs to the glycosyl hydrolase 3 family. In terms of assembly, monomer. Post-translationally, glycosylated. In terms of tissue distribution, expressed in petioles and leaves, but not in fruits.

It carries out the reaction protodioscin + H2O = 26-deglucoprotodioscin + D-glucose. Its activity is regulated as follows. Inhibited by Hg(2+) and D-glucono-1,5-lactone. Functionally, beta-glucosidase highly specific for the cleavage of C-26-bound glucose moiety of furostanol glycosides torvosides A and H. Hydrolyzes only p-nitrophenyl-beta-glucoside, but not p-nitrophenyl-beta-D-fucoside, p-nitrophenyl-beta-L-fucoside, p-nitrophenyl-beta-D-xyloside, p-nitrophenyl-beta-D-galactoside, p-nitrophenyl-beta-D-NAc-glucosamine, p-nitrophenyl-beta-D-mannoside or any of the p-nitrophenyl-alpha-glycosides tested. The sequence is that of Furostanol glycoside 26-O-beta-glucosidase from Solanum torvum (Turkey berry).